Reading from the N-terminus, the 346-residue chain is MLVLGIESSCDETGLALYDTQRGLLAHALHSQIAMHRDYGGVVPELASRDHIRRALPLLEEVIAKSGARREDIDAIAFTQGPGLAGALLVGASIANALALAWNKPTVGIHHLEGHLLSPLLVAEPPPFPFVALLVSGGHTQLMRVTDVGVYETLGETLDDAAGEAFDKTAKLIGLGYPGGPEVSKLAETGTPGAVVLPRPMLHSGDLDFSFSGLKTAVLTQMKKFEAAQLSGDALARAKADLARGFVDAAVDVLVAKSLAALKKTKLKRLVVAGGVGANRQLRAALSAAAAKRGFDVHYPDLALCTDNGAMIALAGALRLARWPEQANVDYAFTVKPRWDLASLAR.

Fe cation is bound by residues H111 and H115. Substrate-binding positions include 134 to 138 (LVSGG), D167, G180, and N279. D307 contacts Fe cation.

The protein belongs to the KAE1 / TsaD family. Fe(2+) serves as cofactor.

Its subcellular location is the cytoplasm. It carries out the reaction L-threonylcarbamoyladenylate + adenosine(37) in tRNA = N(6)-L-threonylcarbamoyladenosine(37) in tRNA + AMP + H(+). Required for the formation of a threonylcarbamoyl group on adenosine at position 37 (t(6)A37) in tRNAs that read codons beginning with adenine. Is involved in the transfer of the threonylcarbamoyl moiety of threonylcarbamoyl-AMP (TC-AMP) to the N6 group of A37, together with TsaE and TsaB. TsaD likely plays a direct catalytic role in this reaction. In Burkholderia multivorans (strain ATCC 17616 / 249), this protein is tRNA N6-adenosine threonylcarbamoyltransferase.